Reading from the N-terminus, the 500-residue chain is NAD(P)H-quinone oxidoreductase chain 4, chloroplastic (500 aa).

A run of 14 helical transmembrane segments spans residues 3–23 (FFPW…LIFF), 37–57 (ICIC…HFQL), 87–107 (IGPI…AWPI), 113–130 (LFHF…GSFS), 134–154 (LLLF…LLSM), 167–187 (FILY…GMGL), 208–228 (ALEI…SPII), 242–262 (HYST…YGLV), 272–292 (AHSI…IYAA), 305–325 (IAYS…SITD), 330–350 (GAVL…FLAG), 386–406 (LALP…GIIT), 416–436 (ILIT…SLSM), and 462–482 (LFVS…PDFV).

It belongs to the complex I subunit 4 family.

The protein resides in the plastid. Its subcellular location is the chloroplast thylakoid membrane. It catalyses the reaction a plastoquinone + NADH + (n+1) H(+)(in) = a plastoquinol + NAD(+) + n H(+)(out). The catalysed reaction is a plastoquinone + NADPH + (n+1) H(+)(in) = a plastoquinol + NADP(+) + n H(+)(out). This is NAD(P)H-quinone oxidoreductase chain 4, chloroplastic from Platanus occidentalis (Sycamore).